The sequence spans 327 residues: Delta-aminolevulinic acid dehydratase (327 aa).

Zn(2+) contacts are provided by cysteine 119, cysteine 121, and cysteine 129. Catalysis depends on lysine 198, which acts as the Schiff-base intermediate with substrate. 5-aminolevulinate contacts are provided by arginine 208 and arginine 220. Glutamate 236 is a binding site for Mg(2+). Lysine 251 (schiff-base intermediate with substrate) is an active-site residue. 5-aminolevulinate is bound by residues serine 277 and tyrosine 316.

It belongs to the ALAD family. In terms of assembly, homooctamer. The cofactor is Zn(2+).

The catalysed reaction is 2 5-aminolevulinate = porphobilinogen + 2 H2O + H(+). It participates in porphyrin-containing compound metabolism; protoporphyrin-IX biosynthesis; coproporphyrinogen-III from 5-aminolevulinate: step 1/4. Its function is as follows. Catalyzes an early step in the biosynthesis of tetrapyrroles. Binds two molecules of 5-aminolevulinate per subunit, each at a distinct site, and catalyzes their condensation to form porphobilinogen. In Synechocystis sp. (strain ATCC 27184 / PCC 6803 / Kazusa), this protein is Delta-aminolevulinic acid dehydratase (hemB).